We begin with the raw amino-acid sequence, 505 residues long: Lysine--tRNA ligase (505 aa).

Residues E409 and E416 each coordinate Mg(2+).

The protein belongs to the class-II aminoacyl-tRNA synthetase family. Homodimer. Mg(2+) is required as a cofactor.

The protein localises to the cytoplasm. It catalyses the reaction tRNA(Lys) + L-lysine + ATP = L-lysyl-tRNA(Lys) + AMP + diphosphate. The protein is Lysine--tRNA ligase of Latilactobacillus sakei subsp. sakei (strain 23K) (Lactobacillus sakei subsp. sakei).